Consider the following 76-residue polypeptide: Putative snRNP Sm-like protein (76 aa).

Positions 4-76 (RPLDVIHKSL…VLAISPTEEG (73 aa)) constitute a Sm domain.

Belongs to the snRNP Sm proteins family.

This is Putative snRNP Sm-like protein from Pyrococcus furiosus (strain ATCC 43587 / DSM 3638 / JCM 8422 / Vc1).